Here is a 202-residue protein sequence, read N- to C-terminus: N-(5'-phosphoribosyl)anthranilate isomerase (202 aa).

It belongs to the TrpF family.

The catalysed reaction is N-(5-phospho-beta-D-ribosyl)anthranilate = 1-(2-carboxyphenylamino)-1-deoxy-D-ribulose 5-phosphate. Its pathway is amino-acid biosynthesis; L-tryptophan biosynthesis; L-tryptophan from chorismate: step 3/5. This is N-(5'-phosphoribosyl)anthranilate isomerase from Bacillus cereus (strain ATCC 14579 / DSM 31 / CCUG 7414 / JCM 2152 / NBRC 15305 / NCIMB 9373 / NCTC 2599 / NRRL B-3711).